We begin with the raw amino-acid sequence, 469 residues long: Cysteine protease ATG4D (469 aa).

The segment covering 1–29 has biased composition (polar residues); it reads MNSVSPLATQYGSPKGSQQMENRSTQSGG. The disordered stretch occupies residues 1–41; it reads MNSVSPLATQYGSPKGSQQMENRSTQSGGHEQRKMGHQDAT. The Nucleophile role is filled by cysteine 131. The disordered stretch occupies residues 169–191; it reads IRSSSPPSMPLSSLATGHSAGDY. Low complexity predominate over residues 171–182; sequence SSSPPSMPLSSL. Catalysis depends on residues aspartate 356 and histidine 358. The disordered stretch occupies residues 436–469; the sequence is QEYAEGPQSSSHPPVCRKKGPLVKRPSSDEFEFL.

It belongs to the peptidase C54 family.

It localises to the cytoplasm. The catalysed reaction is [protein]-C-terminal L-amino acid-glycyl-phosphatidylethanolamide + H2O = [protein]-C-terminal L-amino acid-glycine + a 1,2-diacyl-sn-glycero-3-phosphoethanolamine. It catalyses the reaction [protein]-C-terminal L-amino acid-glycyl-phosphatidylserine + H2O = [protein]-C-terminal L-amino acid-glycine + a 1,2-diacyl-sn-glycero-3-phospho-L-serine. Cysteine protease that plays a key role in autophagy by mediating both proteolytic activation and delipidation of ATG8 family proteins. The protease activity is required for proteolytic activation of ATG8 family proteins to reveal a C-terminal glycine. Exposure of the glycine at the C-terminus is essential for ATG8 proteins conjugation to phosphatidylethanolamine (PE) and insertion to membranes, which is necessary for autophagy. In addition to the protease activity, also mediates delipidation of ATG8 family proteins. Catalyzes delipidation of PE-conjugated forms of ATG8 proteins during macroautophagy. Also involved in non-canonical autophagy, a parallel pathway involving conjugation of ATG8 proteins to single membranes at endolysosomal compartments, by catalyzing delipidation of ATG8 proteins conjugated to phosphatidylserine (PS). The protein is Cysteine protease ATG4D of Xenopus laevis (African clawed frog).